We begin with the raw amino-acid sequence, 791 residues long: ATP-dependent 6-phosphofructokinase, platelet type (791 aa).

An N-acetylmethionine modification is found at methionine 1. The tract at residues methionine 1–isoleucine 399 is N-terminal catalytic PFK domain 1. Position 6 is a phosphoserine (serine 6). The residue at position 12 (serine 12) is a Phosphoserine; by PKA. At serine 21 the chain carries Phosphoserine. ATP contacts are provided by residues glycine 34, arginine 97–serine 98, and glycine 127–serine 130. Residue serine 142 is modified to Phosphoserine. Residues serine 173–aspartate 175, arginine 210, methionine 217–arginine 219, glutamate 273, arginine 301, and histidine 307–arginine 310 each bind substrate. Catalysis depends on aspartate 175, which acts as the Proton acceptor. Serine 386 carries the post-translational modification Phosphoserine. Residue lysine 395 is modified to N6-acetyllysine. The interval lysine 400 to cysteine 411 is interdomain linker. The tract at residues asparagine 412–isoleucine 791 is C-terminal regulatory PFK domain 2. Beta-D-fructose 2,6-bisphosphate is bound at residue arginine 481. Lysine 486 is subject to N6-acetyllysine. Residues threonine 538–asparagine 542, arginine 576, methionine 583–glycine 585, and glutamate 639 each bind beta-D-fructose 2,6-bisphosphate. A glycan (O-linked (GlcNAc) serine) is linked at serine 540. Tyrosine 651 carries the phosphotyrosine modification. Residues arginine 665 and histidine 671–glutamine 674 each bind beta-D-fructose 2,6-bisphosphate. Lysine 688 is subject to N6-acetyllysine. Position 744 (arginine 744) interacts with beta-D-fructose 2,6-bisphosphate.

The protein belongs to the phosphofructokinase type A (PFKA) family. ATP-dependent PFK group I subfamily. Eukaryotic two domain clade 'E' sub-subfamily. As to quaternary structure, homo- and heterotetramers. Phosphofructokinase (PFK) enzyme functions as a tetramer composed of different combinations of 3 types of subunits, called PFKM (M), PFKL (L) and PFKP (P). The composition of the PFK tetramer differs according to the tissue type it is present in. The kinetic and regulatory properties of the tetrameric enzyme are dependent on the subunit composition, hence can vary across tissues. Interacts with ATG4B; promoting phosphorylation of ATG4B. The cofactor is Mg(2+). Post-translationally, glcNAcylation decreases enzyme activity. In terms of processing, phosphorylation at Ser-386 promotes interaction with ATG4B.

Its subcellular location is the cytoplasm. It catalyses the reaction beta-D-fructose 6-phosphate + ATP = beta-D-fructose 1,6-bisphosphate + ADP + H(+). The protein operates within carbohydrate degradation; glycolysis; D-glyceraldehyde 3-phosphate and glycerone phosphate from D-glucose: step 3/4. Allosterically activated by ADP, AMP, or fructose 2,6-bisphosphate, and allosterically inhibited by ATP or citrate. Catalyzes the phosphorylation of D-fructose 6-phosphate to fructose 1,6-bisphosphate by ATP, the first committing step of glycolysis. This Oryctolagus cuniculus (Rabbit) protein is ATP-dependent 6-phosphofructokinase, platelet type (PFKP).